The sequence spans 359 residues: Fructose-bisphosphate aldolase class 2 (359 aa).

An N6-acetyllysine modification is found at Lys-9. A D-glyceraldehyde 3-phosphate-binding site is contributed by Ser-62. Asp-110 acts as the Proton donor in catalysis. Zn(2+) contacts are provided by His-111, Asp-145, Glu-175, and His-227. Gly-228 provides a ligand contact to dihydroxyacetone phosphate. Residue His-265 coordinates Zn(2+). Dihydroxyacetone phosphate-binding positions include 266–268 (GGS) and 287–290 (NIDT).

The protein belongs to the class II fructose-bisphosphate aldolase family. In terms of assembly, homodimer. Zn(2+) serves as cofactor.

The catalysed reaction is beta-D-fructose 1,6-bisphosphate = D-glyceraldehyde 3-phosphate + dihydroxyacetone phosphate. The protein operates within carbohydrate degradation; glycolysis; D-glyceraldehyde 3-phosphate and glycerone phosphate from D-glucose: step 4/4. In terms of biological role, catalyzes the aldol condensation of dihydroxyacetone phosphate (DHAP or glycerone-phosphate) with glyceraldehyde 3-phosphate (G3P) to form fructose 1,6-bisphosphate (FBP) in gluconeogenesis and the reverse reaction in glycolysis. The polypeptide is Fructose-bisphosphate aldolase class 2 (fbaA) (Escherichia coli O157:H7).